Here is a 259-residue protein sequence, read N- to C-terminus: Troponin T, fast skeletal muscle (259 aa).

Over residues Met1–Glu36 the composition is skewed to acidic residues. The disordered stretch occupies residues Met1–Lys62. Ser2 is subject to N-acetylserine. Ser2 is modified (phosphoserine). The segment covering Pro50 to Lys62 has biased composition (basic and acidic residues). At Ser78 the chain carries Phosphoserine. The segment covering Arg101–Lys143 has biased composition (basic and acidic residues). The interval Arg101–Leu180 is disordered. 3 positions are modified to phosphoserine: Ser149, Ser156, and Ser157. Basic and acidic residues predominate over residues Thr171–Leu180. Ser193 carries the post-translational modification Phosphoserine. A Phosphotyrosine modification is found at Tyr209. The disordered stretch occupies residues Arg235–Lys259.

It belongs to the troponin T family.

Its function is as follows. Troponin T is the tropomyosin-binding subunit of troponin, the thin filament regulatory complex which confers calcium-sensitivity to striated muscle actomyosin ATPase activity. This Rattus norvegicus (Rat) protein is Troponin T, fast skeletal muscle (Tnnt3).